Reading from the N-terminus, the 155-residue chain is Ubiquinone biosynthesis protein COQ4 homolog, mitochondrial (155 aa).

This sequence belongs to the COQ4 family. In terms of assembly, component of a multi-subunit COQ enzyme complex. Requires Zn(2+) as cofactor.

Its subcellular location is the mitochondrion inner membrane. The enzyme catalyses a 4-hydroxy-3-methoxy-5-(all-trans-polyprenyl)benzoate + H(+) = a 2-methoxy-6-(all-trans-polyprenyl)phenol + CO2. It functions in the pathway cofactor biosynthesis; ubiquinone biosynthesis. Lyase that catalyzes the C1-decarboxylation of 4-hydroxy-3-methoxy-5-(all-trans-polyprenyl)benzoic acid into 2-methoxy-6-(all-trans-polyprenyl)phenol during ubiquinone biosynthesis. The polypeptide is Ubiquinone biosynthesis protein COQ4 homolog, mitochondrial (Cryptosporidium hominis).